The chain runs to 284 residues: NADH-cytochrome b5 reductase 1 (284 aa).

The chain crosses the membrane as a helical span at residues 7 to 27 (KLVVVIVIVVVPLLFKFIIGP). Residues 38-142 (NDFQSFPLVE…KGPRGNYHYE (105 aa)) enclose the FAD-binding FR-type domain. 148-180 (HLGMIAGGTGIAPMYQIMKAIAMDSHDTTKVSL) contacts FAD.

Belongs to the flavoprotein pyridine nucleotide cytochrome reductase family. In terms of assembly, monomer. Component of the 2-(3-amino-3-carboxypropyl)histidine synthase complex composed of DPH1, DPH2, KTI11/DPH3 and a NADH-dependent reductase, predominantly CBR1. Interacts with KTI11/DPH3. Interacts with STE20. Requires FAD as cofactor.

The protein resides in the mitochondrion outer membrane. The enzyme catalyses 2 Fe(III)-[cytochrome b5] + NADH = 2 Fe(II)-[cytochrome b5] + NAD(+) + H(+). The catalysed reaction is 2 Fe(3+)-[Dph3] + NADH = 2 Fe(2+)-[Dph3] + NAD(+) + H(+). The protein operates within protein modification; peptidyl-diphthamide biosynthesis. With respect to regulation, competitively inhibited by NAD(+). Inhibited by mercurials such as p-chloromercuribenzoate (PCMB) and HgCl(2). Enzymatic activity increases under anaerobic conditions. Functionally, NADH-dependent reductase for KTI11/DPH3 and cytochrome b5. Required for the first step of diphthamide biosynthesis, a post-translational modification of histidine which occurs in elongation factor 2. DPH1 and DPH2 transfer a 3-amino-3-carboxypropyl (ACP) group from S-adenosyl-L-methionine (SAM) to a histidine residue, the reaction is assisted by a reduction system comprising KTI11/DPH3 and a NADH-dependent reductase, predominantly CBR1. By reducing KTI11/DPH3, also involved in the formation of the tRNA wobble base modification mcm5s 2U (5-methoxycarbonylmethyl-2-thiouridine), mediated by the elongator complex. The cytochrome b5/NADH cytochrome b5 reductase electron transfer system supports the catalytic activity of several sterol biosynthetic enzymes. Plays a role in bud morphology. This Saccharomyces cerevisiae (strain YJM789) (Baker's yeast) protein is NADH-cytochrome b5 reductase 1 (CBR1).